Consider the following 1293-residue polypeptide: Enterobactin synthase component F (1293 aa).

An elongation/condensation region spans residues 1 to 301 (MSQHLPLVAA…NVLPLGIHIA (301 aa)). The interval 482-887 (SYREMREQVV…ALPDVEQAVT (406 aa)) is adenylatione. Residues 971–1046 (APKAGSETII…KLATIIDAEE (76 aa)) enclose the Carrier domain. At Ser1006 the chain carries O-(pantetheine 4'-phosphoryl)serine. The interval 1066–1293 (PTLFCFHPAS…GPIIRATLNR (228 aa)) is thioesterase. The active-site Proton acceptor; for thioesterase activity is His1271.

This sequence belongs to the ATP-dependent AMP-binding enzyme family. EntF subfamily. In terms of assembly, proteins EntB, EntD, EntE and EntF are the component of the enterobactin synthase. Components probably do not form a stable complex. EntF acts as a catalytic monomer. Interacts with the MbtH-like protein YbdZ. YbdZ binds to the adenylation domain, but does not alter the structure of the domain. Requires pantetheine 4'-phosphate as cofactor. 4'-phosphopantetheine is transferred from CoA to a specific serine of apo-EntF by EntD. Holo-EntF so formed is then acylated with seryl-AMP.

Its subcellular location is the cytoplasm. The enzyme catalyses 3 2,3-dihydroxybenzoate + 3 L-serine + 6 ATP = enterobactin + 6 AMP + 6 diphosphate + 4 H(+). It catalyses the reaction holo-[peptidyl-carrier protein] + L-serine + ATP = L-seryl-[peptidyl-carrier protein] + AMP + diphosphate. The protein operates within siderophore biosynthesis; enterobactin biosynthesis. Adenylation activity is increased in the presence of the MbtH-like protein YbdZ. Functionally, involved in the biosynthesis of the siderophore enterobactin (enterochelin), which is a macrocyclic trimeric lactone of N-(2,3-dihydroxybenzoyl)-serine. EntF catalyzes the activation of L-serine via ATP-dependent PPi exchange reaction to form seryladenylate. Activated L-serine is loaded onto the peptidyl carrier domain via a thioester linkage to the phosphopanthetheine moiety, forming seryl-S-Ppant-EntF. EntF acts then as the sole catalyst for the formation of the three amide and three ester linkages found in enterobactin, using seryladenylate and 2,3-dihydroxybenzoate-S-Ppant-EntB (DHB-S-Ppant-EntB) as substrates, via the formation of a DHB-Ser-S-Ppant-EntF intermediate. The sequence is that of Enterobactin synthase component F from Escherichia coli (strain K12).